The sequence spans 269 residues: 4-hydroxy-tetrahydrodipicolinate reductase (269 aa).

NAD(+)-binding positions include 8–13 and Glu-34; that span reads GAAGRM. NADP(+) is bound at residue Arg-35. Residues 98–100 and 122–125 contribute to the NAD(+) site; these read GTT and APNY. The Proton donor/acceptor role is filled by His-155. Residue His-156 participates in (S)-2,3,4,5-tetrahydrodipicolinate binding. The active-site Proton donor is Lys-159. 165–166 is a binding site for (S)-2,3,4,5-tetrahydrodipicolinate; it reads GT.

Belongs to the DapB family.

It localises to the cytoplasm. It catalyses the reaction (S)-2,3,4,5-tetrahydrodipicolinate + NAD(+) + H2O = (2S,4S)-4-hydroxy-2,3,4,5-tetrahydrodipicolinate + NADH + H(+). The catalysed reaction is (S)-2,3,4,5-tetrahydrodipicolinate + NADP(+) + H2O = (2S,4S)-4-hydroxy-2,3,4,5-tetrahydrodipicolinate + NADPH + H(+). It participates in amino-acid biosynthesis; L-lysine biosynthesis via DAP pathway; (S)-tetrahydrodipicolinate from L-aspartate: step 4/4. In terms of biological role, catalyzes the conversion of 4-hydroxy-tetrahydrodipicolinate (HTPA) to tetrahydrodipicolinate. The protein is 4-hydroxy-tetrahydrodipicolinate reductase of Vibrio vulnificus (strain YJ016).